A 195-amino-acid polypeptide reads, in one-letter code: Thymidylate kinase (195 aa).

ATP is bound at residue 7–14; that stretch reads GIDGSGKT.

Belongs to the thymidylate kinase family.

It catalyses the reaction dTMP + ATP = dTDP + ADP. Phosphorylation of dTMP to form dTDP in both de novo and salvage pathways of dTTP synthesis. The sequence is that of Thymidylate kinase (tmk) from Aquifex aeolicus (strain VF5).